A 692-amino-acid polypeptide reads, in one-letter code: Methionine--tRNA ligase (692 aa).

Positions 26–36 match the 'HIGH' region motif; sequence PYANGSIHLGH. Zn(2+) contacts are provided by Cys157, Cys160, Cys170, and Cys173. Positions 342 to 346 match the 'KMSKS' region motif; that stretch reads KMSKS. Lys345 contacts ATP. In terms of domain architecture, tRNA-binding spans 590 to 692; that stretch reads DFAKVDLRIA…SGAQPGMRVK (103 aa).

The protein belongs to the class-I aminoacyl-tRNA synthetase family. MetG type 1 subfamily. Homodimer. The cofactor is Zn(2+).

It localises to the cytoplasm. It carries out the reaction tRNA(Met) + L-methionine + ATP = L-methionyl-tRNA(Met) + AMP + diphosphate. Its function is as follows. Is required not only for elongation of protein synthesis but also for the initiation of all mRNA translation through initiator tRNA(fMet) aminoacylation. This chain is Methionine--tRNA ligase, found in Methylobacillus flagellatus (strain ATCC 51484 / DSM 6875 / VKM B-1610 / KT).